The primary structure comprises 338 residues: Lipoate-protein ligase A (338 aa).

Residues 29–216 form the BPL/LPL catalytic domain; that stretch reads PATQRVLFLW…AFFAHYGERV (188 aa). Residues Arg-71, 76-79, and Lys-134 each bind ATP; that span reads GAVF. Lys-134 provides a ligand contact to (R)-lipoate.

Belongs to the LplA family. In terms of assembly, monomer.

It localises to the cytoplasm. The catalysed reaction is L-lysyl-[lipoyl-carrier protein] + (R)-lipoate + ATP = N(6)-[(R)-lipoyl]-L-lysyl-[lipoyl-carrier protein] + AMP + diphosphate + H(+). Its pathway is protein modification; protein lipoylation via exogenous pathway; protein N(6)-(lipoyl)lysine from lipoate: step 1/2. It participates in protein modification; protein lipoylation via exogenous pathway; protein N(6)-(lipoyl)lysine from lipoate: step 2/2. Catalyzes both the ATP-dependent activation of exogenously supplied lipoate to lipoyl-AMP and the transfer of the activated lipoyl onto the lipoyl domains of lipoate-dependent enzymes. This is Lipoate-protein ligase A from Escherichia coli O6:H1 (strain CFT073 / ATCC 700928 / UPEC).